Reading from the N-terminus, the 704-residue chain is Elongation factor G (704 aa).

Positions 8–290 (ARYRNIGISA…AVIDYLPSPV (283 aa)) constitute a tr-type G domain. Residues 17–24 (AHIDAGKT), 88–92 (DTPGH), and 142–145 (NKMD) each bind GTP. N6-acetyllysine is present on residues Lys504 and Lys643.

Belongs to the TRAFAC class translation factor GTPase superfamily. Classic translation factor GTPase family. EF-G/EF-2 subfamily.

The protein localises to the cytoplasm. Its function is as follows. Catalyzes the GTP-dependent ribosomal translocation step during translation elongation. During this step, the ribosome changes from the pre-translocational (PRE) to the post-translocational (POST) state as the newly formed A-site-bound peptidyl-tRNA and P-site-bound deacylated tRNA move to the P and E sites, respectively. Catalyzes the coordinated movement of the two tRNA molecules, the mRNA and conformational changes in the ribosome. The protein is Elongation factor G of Shigella flexneri.